A 953-amino-acid chain; its full sequence is Serine/threonine-protein kinase ppk30 (953 aa).

Residues 57–326 (VIIQRYLSEG…IYQTLKEIME (270 aa)) form the Protein kinase domain. ATP is bound by residues 63–71 (LSEGGFSHV) and lysine 85. Residue aspartate 187 is the Proton acceptor of the active site. Disordered stretches follow at residues 343 to 402 (ASTY…PSVS), 427 to 451 (SPIP…RRAD), 538 to 606 (RFLP…NRMN), 641 to 669 (RKEP…NKDV), 748 to 791 (STSQ…RPIG), and 864 to 953 (RKSC…ESLE). 3 stretches are compositionally biased toward polar residues: residues 355 to 369 (RTPS…SRPA), 378 to 402 (TVQT…PSVS), and 433 to 444 (KSYSATIQTPRS). Residues 547–557 (PSEFSSSVGSK) show a composition bias toward low complexity. A compositionally biased stretch (polar residues) spans 558 to 575 (QNLSMDIPSVQNVSTKQK). The span at 656–669 (LKKDQSSEVANKDV) shows a compositional bias: basic and acidic residues. Residues 748 to 766 (STSQVSHTQRLQQSISTSL) show a composition bias toward polar residues. Basic and acidic residues-rich tracts occupy residues 767 to 778 (ERVKSNTKKESN), 865 to 884 (KSCE…DLER), and 937 to 953 (PHIE…ESLE). 2 positions are modified to phosphoserine: serine 872 and serine 875.

Belongs to the protein kinase superfamily. Ser/Thr protein kinase family.

The protein resides in the cytoplasm. The catalysed reaction is L-seryl-[protein] + ATP = O-phospho-L-seryl-[protein] + ADP + H(+). The enzyme catalyses L-threonyl-[protein] + ATP = O-phospho-L-threonyl-[protein] + ADP + H(+). In Schizosaccharomyces pombe (strain 972 / ATCC 24843) (Fission yeast), this protein is Serine/threonine-protein kinase ppk30 (ppk30).